A 364-amino-acid polypeptide reads, in one-letter code: MKRINVLHFGAGNIGRGVILPIYQQNDFSIDLVELNQNTVNELQKQKQYQVHYLDCDQSQLVNDFNTWNLKDEAKIIELMERADVISTSIGAKNLASLKTLFDKAKFHKRAIVLCFENGFRISSNFKNILQLNNTQVNFVDVVIDTIAPNFEKKANFLDIYCEKYSEIYAETFPLEIKGVNQKNSLDRFIIKKLLLVNALHSVIGLLGFQQKLKYVHETLQVKSNLTFVEKLAQQIIDALCAEYPEFNKNNLLSYGKNNLVRFANPKIQDLNTRLIREPLRKLNQNERFYAIYKLFKKNKIALNNILQVYLMVLKTNITDDTESQQIAKLINEKAWTELAKLSSLEESEWNLIKQELSREITKK.

Valine 6–glycine 17 contributes to the NAD(+) binding site.

Belongs to the mannitol dehydrogenase family.

The enzyme catalyses D-mannitol 1-phosphate + NAD(+) = beta-D-fructose 6-phosphate + NADH + H(+). This chain is Mannitol-1-phosphate 5-dehydrogenase (mtlD), found in Mycoplasma pneumoniae (strain ATCC 29342 / M129 / Subtype 1) (Mycoplasmoides pneumoniae).